We begin with the raw amino-acid sequence, 342 residues long: Methionyl-tRNA formyltransferase (342 aa).

119 to 122 (SILP) lines the (6S)-5,6,7,8-tetrahydrofolate pocket.

The protein belongs to the Fmt family.

It carries out the reaction L-methionyl-tRNA(fMet) + (6R)-10-formyltetrahydrofolate = N-formyl-L-methionyl-tRNA(fMet) + (6S)-5,6,7,8-tetrahydrofolate + H(+). Functionally, attaches a formyl group to the free amino group of methionyl-tRNA(fMet). The formyl group appears to play a dual role in the initiator identity of N-formylmethionyl-tRNA by promoting its recognition by IF2 and preventing the misappropriation of this tRNA by the elongation apparatus. The chain is Methionyl-tRNA formyltransferase from Nostoc sp. (strain PCC 7120 / SAG 25.82 / UTEX 2576).